Consider the following 447-residue polypeptide: Phosphoglucosamine mutase (447 aa).

The active-site Phosphoserine intermediate is Ser107. Mg(2+) contacts are provided by Ser107, Asp246, Asp248, and Asp250. Position 107 is a phosphoserine (Ser107).

Belongs to the phosphohexose mutase family. Mg(2+) serves as cofactor. Post-translationally, activated by phosphorylation.

It catalyses the reaction alpha-D-glucosamine 1-phosphate = D-glucosamine 6-phosphate. In terms of biological role, catalyzes the conversion of glucosamine-6-phosphate to glucosamine-1-phosphate. This Ralstonia pickettii (strain 12J) protein is Phosphoglucosamine mutase.